The following is a 345-amino-acid chain: Endochitinase 4 (345 aa).

The first 27 residues, 1–27, serve as a signal peptide directing secretion; sequence MAPLLNTGLVILPLIVSTLLGPMPAFA. Asparagine 29 and asparagine 89 each carry an N-linked (GlcNAc...) asparagine glycan. Residues 41-345 enclose the GH18 domain; the sequence is KVLQGYWENW…TFGDNVKGRL (305 aa). The Proton donor role is filled by glutamate 163. A glycan (N-linked (GlcNAc...) asparagine) is linked at asparagine 316.

It belongs to the glycosyl hydrolase 18 family. Chitinase class V subfamily.

It localises to the secreted. The catalysed reaction is Random endo-hydrolysis of N-acetyl-beta-D-glucosaminide (1-&gt;4)-beta-linkages in chitin and chitodextrins.. In terms of biological role, secreted chitinase involved in the degradation of chitin, a component of the cell walls of fungi and exoskeletal elements of some animals (including worms and arthropods). Participates in the infection process and directly acts in the penetration process of the host cuticle. The sequence is that of Endochitinase 4 (chi4) from Metarhizium robertsii (strain ARSEF 23 / ATCC MYA-3075) (Metarhizium anisopliae (strain ARSEF 23)).